A 1123-amino-acid polypeptide reads, in one-letter code: Rabphilin-1 (1123 aa).

Basic residues predominate over residues 1-17 (MTKSTKLRHCKQKKKKP). Disordered stretches follow at residues 1–56 (MTKS…GSRS) and 88–140 (SAHN…PSTH). Low complexity predominate over residues 36 to 46 (DAATTTSTTDA). One can recognise a RabBD domain in the interval 215 to 341 (KAQTGSITAA…KKSGAWFYKE (127 aa)). Residues 263-328 (GNGVTHCLLC…LCKICSEARE (66 aa)) form an FYVE-type zinc finger. Residues Cys269, Cys272, Cys288, Cys291, Cys296, Cys300, Cys320, and Cys323 each coordinate Zn(2+). Composition is skewed to polar residues over residues 365–375 (PNASSAATPLS), 387–400 (TMPSTSSCQMTTPK), 410–428 (PGLQMNGGPTSPLPNGTRR), and 487–497 (ASSSDGESFVQ). 3 disordered regions span residues 365 to 710 (PNAS…VGSA), 737 to 779 (TSRA…LRTS), and 796 to 818 (HIVSSEPTSSTTSNQNHTSVPIP). Over residues 531 to 541 (SRREANMERFS) the composition is skewed to basic and acidic residues. Residues 563 to 574 (ESRPSTRSTSPR) are compositionally biased toward low complexity. 2 stretches are compositionally biased toward polar residues: residues 605–632 (VVQSDHSNPQQSGLTCSSSSLTPLQQQA) and 649–666 (PDRTTSRVAQSASGTSLV). A compositionally biased stretch (low complexity) spans 742 to 753 (SPLAASSSFLSS). The segment covering 756–768 (DDTKQKNRRRDGV) has biased composition (basic and acidic residues). Positions 803 to 818 (TSSTTSNQNHTSVPIP) are enriched in low complexity. C2 domains lie at 844-967 (SLGS…NLYL) and 984-1103 (DRGK…RQWI). Ca(2+) is bound by residues Asp875, Asp881, Asp936, Asp938, Asp943, Asp1015, Asp1021, Asp1075, Asp1077, and Asp1083.

Ca(2+) serves as cofactor.

Its subcellular location is the synapse. Functionally, rab-3 effector. The sequence is that of Rabphilin-1 (rbf-1) from Caenorhabditis elegans.